Reading from the N-terminus, the 465-residue chain is Ribulose bisphosphate carboxylase large chain (465 aa).

The residue at position 4 (Lys-4) is an N6,N6,N6-trimethyllysine. Residues Xaa-113 and Thr-163 each contribute to the substrate site. Residue Lys-165 is the Proton acceptor of the active site. Lys-167 lines the substrate pocket. Positions 191, 193, and 194 each coordinate Mg(2+). Residue Lys-191 is modified to N6-carboxylysine. The active-site Proton acceptor is the His-284. Residues Arg-285, His-317, and Ser-369 each contribute to the substrate site.

This sequence belongs to the RuBisCO large chain family. Type I subfamily. In terms of assembly, heterohexadecamer of 8 large chains and 8 small chains; disulfide-linked. The disulfide link is formed within the large subunit homodimers. Mg(2+) is required as a cofactor. The disulfide bond which can form in the large chain dimeric partners within the hexadecamer appears to be associated with oxidative stress and protein turnover.

It is found in the plastid. It localises to the chloroplast. The catalysed reaction is 2 (2R)-3-phosphoglycerate + 2 H(+) = D-ribulose 1,5-bisphosphate + CO2 + H2O. It catalyses the reaction D-ribulose 1,5-bisphosphate + O2 = 2-phosphoglycolate + (2R)-3-phosphoglycerate + 2 H(+). Its function is as follows. RuBisCO catalyzes two reactions: the carboxylation of D-ribulose 1,5-bisphosphate, the primary event in carbon dioxide fixation, as well as the oxidative fragmentation of the pentose substrate in the photorespiration process. Both reactions occur simultaneously and in competition at the same active site. This chain is Ribulose bisphosphate carboxylase large chain, found in Cornus obliqua (Silky dogwood).